Consider the following 244-residue polypeptide: DNA repair protein RecO (244 aa).

This sequence belongs to the RecO family.

Functionally, involved in DNA repair and RecF pathway recombination. This Geobacter metallireducens (strain ATCC 53774 / DSM 7210 / GS-15) protein is DNA repair protein RecO.